The primary structure comprises 567 residues: uncharacterized protein (567 aa).

Residues 1–31 (MLDTILINVFRRDGDDDDDDGQDPALQELYS) are Lumenal-facing. The helical transmembrane segment at 32–52 (SWALFILLVLLIGALLTSYYV) threads the bilayer. The Cytoplasmic segment spans residues 53-64 (QSKKIRAIHETV). A helical membrane pass occupies residues 65 to 85 (ISVFVGMVVGLIIRVSPGLII). Residues 86–87 (QN) lie on the Lumenal side of the membrane. A helical membrane pass occupies residues 88-108 (MVSFHSTYFFNVLLPPIILNS). At 109-128 (GYELHQSNFFRNIGTILTFA) the chain is on the cytoplasmic side. Residues 129–149 (FAGTFISAVTLGVLVYIFSFL) form a helical membrane-spanning segment. Residues 150 to 159 (NFENLSMTFV) are Lumenal-facing. The chain crosses the membrane as a helical span at residues 160–180 (EALSMGATLSATDPVTVLAIF). The Cytoplasmic segment spans residues 181-188 (NSYKVDQK). The chain crosses the membrane as a helical span at residues 189–209 (LYTIIFGESILNDAVAIVMFE). Over 210-227 (TLQQFQGKTLHFFTLFSG) the chain is Lumenal. A helical membrane pass occupies residues 228–248 (IGIFIITFFISLLIGVSIGLI). The Cytoplasmic segment spans residues 249–277 (TALLLKYSYLRRYPSIESCIILLMAYTSY). The chain crosses the membrane as a helical span at residues 278–298 (FFSNGCHMSGVVSLLFCGITL). Residues 299 to 315 (KHYAFFNMSYKAKLSTK) are Lumenal-facing. Residues 316–338 (YVFRVLAQLSENFIFIYLGMSLF) traverse the membrane as a helical segment. The Cytoplasmic portion of the chain corresponds to 339-347 (TQVDLVYKP). The chain crosses the membrane as a helical span at residues 348-366 (IFILITTVAVTASRYMNVF). At 367-392 (PLSNLLNKFHRQRNGNLIDHIPYSYQ) the chain is on the lumenal side. A helical membrane pass occupies residues 393-413 (MMLFWAGLRGAVGVALAAGFE). Residues 414 to 424 (GENAQTLRATT) lie on the Cytoplasmic side of the membrane. A helical transmembrane segment spans residues 425–445 (LVVVVLTLIIFGGTTARMLEI). The Lumenal segment spans residues 446–567 (LHIETGVAAD…RDNLKNGTKK (122 aa)). Ser515 bears the Phosphoserine mark.

The protein belongs to the monovalent cation:proton antiporter 1 (CPA1) transporter (TC 2.A.36) family.

The protein resides in the golgi apparatus membrane. This is an uncharacterized protein from Schizosaccharomyces pombe (strain 972 / ATCC 24843) (Fission yeast).